A 314-amino-acid polypeptide reads, in one-letter code: Glycerol-3-phosphate dehydrogenase [NAD(P)+] (314 aa).

Positions 11, 30, and 96 each coordinate NADPH. The sn-glycerol 3-phosphate site is built by K96, G124, and S126. A128 lines the NADPH pocket. Sn-glycerol 3-phosphate contacts are provided by K179, D232, S242, R243, and N244. Residue K179 is the Proton acceptor of the active site. An NADPH-binding site is contributed by R243. E264 is an NADPH binding site.

The protein belongs to the NAD-dependent glycerol-3-phosphate dehydrogenase family.

Its subcellular location is the cytoplasm. It carries out the reaction sn-glycerol 3-phosphate + NAD(+) = dihydroxyacetone phosphate + NADH + H(+). The enzyme catalyses sn-glycerol 3-phosphate + NADP(+) = dihydroxyacetone phosphate + NADPH + H(+). It functions in the pathway membrane lipid metabolism; glycerophospholipid metabolism. Catalyzes the reduction of the glycolytic intermediate dihydroxyacetone phosphate (DHAP) to sn-glycerol 3-phosphate (G3P), the key precursor for phospholipid synthesis. In Paracoccus denitrificans (strain Pd 1222), this protein is Glycerol-3-phosphate dehydrogenase [NAD(P)+].